Reading from the N-terminus, the 285-residue chain is Energy-coupling factor transporter ATP-binding protein EcfA2 (285 aa).

The ABC transporter domain maps to Ile3–Ala245. Gly40–Ser47 contacts ATP.

Belongs to the ABC transporter superfamily. Energy-coupling factor EcfA family. In terms of assembly, forms a stable energy-coupling factor (ECF) transporter complex composed of 2 membrane-embedded substrate-binding proteins (S component), 2 ATP-binding proteins (A component) and 2 transmembrane proteins (T component).

It is found in the cell membrane. In terms of biological role, ATP-binding (A) component of a common energy-coupling factor (ECF) ABC-transporter complex. Unlike classic ABC transporters this ECF transporter provides the energy necessary to transport a number of different substrates. This chain is Energy-coupling factor transporter ATP-binding protein EcfA2, found in Clostridium perfringens (strain 13 / Type A).